We begin with the raw amino-acid sequence, 282 residues long: Deoxyribonuclease-1 (282 aa).

The signal sequence occupies residues 1 to 22; sequence MRGARLTGALLALAGLLQVALS. The N-linked (GlcNAc...) asparagine glycan is linked to asparagine 40. Glutamate 100 is an active-site residue. An intrachain disulfide couples cysteine 123 to cysteine 126. An N-linked (GlcNAc...) asparagine glycan is attached at asparagine 128. Residue histidine 156 is part of the active site. Residues cysteine 195 and cysteine 231 are joined by a disulfide bond.

It belongs to the DNase I family. Ca(2+) is required as a cofactor. Requires Mg(2+) as cofactor.

It is found in the secreted. The protein resides in the zymogen granule. The protein localises to the nucleus envelope. The catalysed reaction is Endonucleolytic cleavage to 5'-phosphodinucleotide and 5'-phosphooligonucleotide end-products.. In terms of biological role, serum endocuclease secreted into body fluids by a wide variety of exocrine and endocrine organs. Expressed by non-hematopoietic tissues and preferentially cleaves protein-free DNA. Among other functions, seems to be involved in cell death by apoptosis. Binds specifically to G-actin and blocks actin polymerization. Together with DNASE1L3, plays a key role in degrading neutrophil extracellular traps (NETs). NETs are mainly composed of DNA fibers and are released by neutrophils to bind pathogens during inflammation. Degradation of intravascular NETs by DNASE1 and DNASE1L3 is required to prevent formation of clots that obstruct blood vessels and cause organ damage following inflammation. The protein is Deoxyribonuclease-1 (DNASE1) of Equus caballus (Horse).